The following is a 466-amino-acid chain: 3-isopropylmalate dehydratase large subunit (466 aa).

[4Fe-4S] cluster-binding residues include Cys347, Cys407, and Cys410.

It belongs to the aconitase/IPM isomerase family. LeuC type 1 subfamily. As to quaternary structure, heterodimer of LeuC and LeuD. [4Fe-4S] cluster serves as cofactor.

The catalysed reaction is (2R,3S)-3-isopropylmalate = (2S)-2-isopropylmalate. It participates in amino-acid biosynthesis; L-leucine biosynthesis; L-leucine from 3-methyl-2-oxobutanoate: step 2/4. In terms of biological role, catalyzes the isomerization between 2-isopropylmalate and 3-isopropylmalate, via the formation of 2-isopropylmaleate. In Buchnera aphidicola subsp. Thelaxes suberi, this protein is 3-isopropylmalate dehydratase large subunit.